The chain runs to 500 residues: Na(+)/H(+) antiporter NhaB (500 aa).

12 consecutive transmembrane segments (helical) span residues 34–54, 58–78, 96–116, 129–149, 150–170, 205–225, 241–261, 311–331, 350–370, 394–414, 450–470, and 477–497; these read LLLATLGPVVTGWVLVIQFIF, MALKCYPLMPGGLLLVEALLL, VILLLMFMVAGIHFMKELLLF, AVLSLLFCVLSAFLSAFLDAL, TVTAVIISAAVGFYAVYHRVA, LLMHGAVGTALGGVCTLVGEP, FFLKVAPVSMPVLAAGLVTCV, ILIVCLGLHIAEVGLIGLMVI, FQDAMPFTALLVVFFAVVAVI, MLYLANGLLSAISDNVFVATI, ATPNGQAAFLFLLTSAIAPLI, and MVWMALPYTVVMGGLGWWAVT.

Belongs to the NhaB Na(+)/H(+) (TC 2.A.34) antiporter family.

Its subcellular location is the cell inner membrane. It catalyses the reaction 2 Na(+)(in) + 3 H(+)(out) = 2 Na(+)(out) + 3 H(+)(in). Na(+)/H(+) antiporter that extrudes sodium in exchange for external protons. This chain is Na(+)/H(+) antiporter NhaB, found in Pseudomonas entomophila (strain L48).